Consider the following 959-residue polypeptide: Mitogen-activated protein kinase kinase kinase 13 (959 aa).

The interval 1 to 47 (MANPQEHLSCSSLPHLPLTENKTSGGRNELAAMGNHPSPKLPEDPQE) is disordered. Residues 7–18 (HLSCSSLPHLPL) are compositionally biased toward low complexity. The Protein kinase domain maps to 167–408 (ISELQWLGSG…FRQTLMHLDI (242 aa)). Residues 173–181 (LGSGAQGAV) and Lys-194 each bind ATP. Asp-278 (proton acceptor) is an active-site residue. Leucine-zipper stretches follow at residues 432–453 (VKKH…DEEL) and 485–506 (LSAI…EQAV). Disordered regions lie at residues 533 to 599 (KRKG…GSHS), 739 to 828 (GSLD…RQRP), 842 to 902 (SSEN…LSDK), and 927 to 959 (NPVQ…SATW). Over residues 566 to 577 (SPLSGSPKMSTA) the composition is skewed to polar residues. The segment covering 581–593 (SRYRSKPRHRRGN) has biased composition (basic residues). 2 stretches are compositionally biased toward polar residues: residues 754–774 (DLSS…SERT) and 780–790 (SGCQSGISHQF). The segment covering 808 to 820 (DSSEEEGEVDSEV) has biased composition (acidic residues). The segment covering 866-876 (SANRRQDRLAE) has biased composition (basic and acidic residues). The segment covering 934-943 (SDCDSSEGEC) has biased composition (acidic residues). The span at 947–959 (TVRTSKNYSSATW) shows a compositional bias: polar residues.

This sequence belongs to the protein kinase superfamily. STE Ser/Thr protein kinase family. MAP kinase kinase kinase subfamily. Homodimer; forms dimers through the leucine-zipper motif. Interacts with the C-terminus of MAPK8IP1 through the kinase catalytic domain. Binds PRDX3. Associates with the IKK complex through the kinase domain. Mg(2+) serves as cofactor. In terms of processing, autophosphorylated on serine and threonine residues.

The protein resides in the cytoplasm. It localises to the membrane. The enzyme catalyses L-seryl-[protein] + ATP = O-phospho-L-seryl-[protein] + ADP + H(+). The catalysed reaction is L-threonyl-[protein] + ATP = O-phospho-L-threonyl-[protein] + ADP + H(+). With respect to regulation, activated by autophosphorylation and homodimerization. Its function is as follows. Activates the JUN N-terminal pathway through activation of the MAP kinase kinase MAP2K7. Acts synergistically with PRDX3 to regulate the activation of NF-kappa-B in the cytosol. This activation is kinase-dependent and involves activating the IKK complex, the IKBKB-containing complex that phosphorylates inhibitors of NF-kappa-B. The chain is Mitogen-activated protein kinase kinase kinase 13 (Map3k13) from Mus musculus (Mouse).